The sequence spans 78 residues: TP53-regulated inhibitor of apoptosis 1-A (78 aa).

Residues 1 to 52 (MNSVGEECTDMKRDYDQCFNRWFAEKFLKGAGSGDPCTELFRRYRECVQKAI) adopt a coiled-coil conformation. Residues 5–55 (GEECTDMKRDYDQCFNRWFAEKFLKGAGSGDPCTELFRRYRECVQKAIKDK) enclose the CHCH domain. 2 short sequence motifs (cx9C motif) span residues 8 to 18 (CTDMKRDYDQC) and 37 to 47 (CTELFRRYREC). Intrachain disulfides connect cysteine 8–cysteine 47 and cysteine 18–cysteine 37.

It belongs to the TRIAP1/MDM35 family. Monomer. Forms a complex with prelid1 in the mitochondrion intermembrane space. Interacts with prelid3a.

It localises to the mitochondrion. Its subcellular location is the mitochondrion intermembrane space. The enzyme catalyses a 1,2-diacyl-sn-glycero-3-phosphate(in) = a 1,2-diacyl-sn-glycero-3-phosphate(out). Involved in the modulation of the mitochondrial apoptotic pathway by ensuring the accumulation of cardiolipin (CL) in mitochondrial membranes. The triap1:prelid1 complex probably functions as a phosphatidic acid (PA) transporter across the mitochondrion intermembrane space to provide PA for cardiolipin CL synthesis in the inner membrane. Likewise, the triap1:prelid3a complex mediates the transfer of phosphatidic acid (PA) between liposomes (in vitro) and probably functions as a PA transporter across the mitochondrion intermembrane space (in vivo). Mediates cell survival by inhibiting activation of caspase-9 which prevents induction of apoptosis. Required for pronephros development; probably involved at an early stage in the formation of pronephric components derived from the somatic layer. The protein is TP53-regulated inhibitor of apoptosis 1-A (triap1-a) of Xenopus laevis (African clawed frog).